The sequence spans 138 residues: Beta-lactamase HcpB (138 aa).

TPR repeat units lie at residues 1-28, 57-94, and 97-130; these read MVGG…NEMF, GNGC…NDQD, and LILG…GSED. Intrachain disulfides connect Cys-22–Cys-30, Cys-52–Cys-60, Cys-88–Cys-96, and Cys-124–Cys-132.

This sequence belongs to the hcp beta-lactamase family.

The catalysed reaction is a beta-lactam + H2O = a substituted beta-amino acid. Functionally, hydrolyzes 6-aminopenicillinic acid and 7-aminocephalosporanic acid (ACA) derivatives. In Helicobacter pylori (strain ATCC 700392 / 26695) (Campylobacter pylori), this protein is Beta-lactamase HcpB (hcpB).